The chain runs to 454 residues: Aminodeoxychorismate synthase component 1 (454 aa).

Residues Ser37, 44 to 47 (YNRF), and 241 to 243 (PFS) each bind L-tryptophan. Catalysis depends on Glu259, which acts as the Proton donor. Lys275 serves as the catalytic N6-(4-deoxychorismate)-lysine intermediate.

Belongs to the anthranilate synthase component I family. In terms of assembly, monomer. Heterodimer consisting of two non-identical subunits: a glutamine amidotransferase subunit (PabA) and a aminodeoxychorismate synthase subunit (PabB). Mg(2+) serves as cofactor.

It catalyses the reaction chorismate + L-glutamine = 4-amino-4-deoxychorismate + L-glutamate. It participates in cofactor biosynthesis; tetrahydrofolate biosynthesis; 4-aminobenzoate from chorismate: step 1/2. Part of a heterodimeric complex that catalyzes the two-step biosynthesis of 4-amino-4-deoxychorismate (ADC), a precursor of p-aminobenzoate (PABA) and tetrahydrofolate. In the first step, a glutamine amidotransferase (PabA) generates ammonia as a substrate that, along with chorismate, is used in the second step, catalyzed by aminodeoxychorismate synthase (PabB) to produce ADC. The sequence is that of Aminodeoxychorismate synthase component 1 (pabB) from Salmonella typhimurium (strain LT2 / SGSC1412 / ATCC 700720).